Consider the following 231-residue polypeptide: S-norcoclaurine synthase 1 (231 aa).

107-109 (YKE) lines the dopamine pocket. Lys-121 (proton donor) is an active-site residue. Position 140 (Asp-140) interacts with (4-hydroxyphenyl)acetaldehyde. A helical membrane pass occupies residues 210-230 (LLLCLIICLVIAGGMFVAGVP).

It belongs to the BetVI family. Detected in roots, stems, leaves, flower buds and germinating seeds.

It localises to the membrane. It carries out the reaction (4-hydroxyphenyl)acetaldehyde + dopamine = (S)-norcoclaurine + H2O. The protein operates within alkaloid biosynthesis; (S)-reticuline biosynthesis. Its activity is regulated as follows. Activity doubles within 5 hours of elicitor treatment and continues to increase for at least 80 hours. Its function is as follows. Involved in the biosynthesis of (S)-coclaurine, the common precursor of all benzylisoquinoline alkaloids such as morphine, sanguinarine, codeine or papaverine. Condenses dopamine and 4-hydroxyphenylacetaldehyde. In Papaver somniferum (Opium poppy), this protein is S-norcoclaurine synthase 1.